The sequence spans 263 residues: Small ribosomal subunit protein uS3 (263 aa).

Residues 39-107 (VREYLKKKLK…PVHVNIEEIR (69 aa)) enclose the KH type-2 domain. The disordered stretch occupies residues 211-263 (GELPPEAATPREEERRPRRAPRGDRPDGGRPGRPGGRGRGPRKADAAPAPEGE). Positions 219–240 (TPREEERRPRRAPRGDRPDGGR) are enriched in basic and acidic residues.

Belongs to the universal ribosomal protein uS3 family. Part of the 30S ribosomal subunit. Forms a tight complex with proteins S10 and S14.

Binds the lower part of the 30S subunit head. Binds mRNA in the 70S ribosome, positioning it for translation. The chain is Small ribosomal subunit protein uS3 from Bordetella petrii (strain ATCC BAA-461 / DSM 12804 / CCUG 43448).